The sequence spans 200 residues: Recombination protein RecR (200 aa).

The C4-type zinc-finger motif lies at C58–C73. The Toprim domain occupies D81–P176.

It belongs to the RecR family.

May play a role in DNA repair. It seems to be involved in an RecBC-independent recombinational process of DNA repair. It may act with RecF and RecO. This Pelotomaculum thermopropionicum (strain DSM 13744 / JCM 10971 / SI) protein is Recombination protein RecR.